The following is a 268-amino-acid chain: MDWSNIIFAFSLTLFAGLATGVGGVIAVARKAPGERFLAGSLGFSVGVMLFVSFVEILPKAVEELTGVWGERGGNWAATGAFFAGIALIAVIDRLVPTAINPHEPSTVGGAVEGYERRSRMMRAGVLTAIAISIHNFPEGFATFVAGLTDPRIAIPVAVAIAIHNIPEGIAVAVPIREATGSRGKALKWATLSGLAEPAGAVVGFILLMPFLGPEAMGLSFAAVAGIMVFISLDELLPTAISSGRHHTAIYGLVGGMAVMAVSLLLFI.

8 helical membrane-spanning segments follow: residues 6–26 (IIFA…GGVI), 37–57 (FLAG…FVEI), 73–93 (GGNW…AVID), 126–146 (VLTA…TFVA), 153–173 (IAIP…IAVA), 189–209 (WATL…ILLM), 211–231 (FLGP…MVFI), and 248–268 (TAIY…LLFI). Residues N136 and E139 each coordinate Fe(2+). Residues E139 and H164 each coordinate Zn(2+). Fe(2+) contacts are provided by N165, E168, and E197. Residue E168 participates in Zn(2+) binding.

Belongs to the ZIP transporter (TC 2.A.5) family. ZupT subfamily.

The protein localises to the cell membrane. The enzyme catalyses Zn(2+)(in) = Zn(2+)(out). Its function is as follows. Mediates zinc uptake. May also transport other divalent cations. This chain is Zinc transporter ZupT, found in Corynebacterium efficiens (strain DSM 44549 / YS-314 / AJ 12310 / JCM 11189 / NBRC 100395).